The sequence spans 213 residues: rRNA N(6)-adenosine-methyltransferase Mettl5 (213 aa).

S-adenosyl-L-methionine-binding positions include Gln-28, Thr-31, Gly-59, Cys-62, and Asp-108–Val-109.

Belongs to the methyltransferase superfamily. PrmA family. As to quaternary structure, heterodimer; heterodimerizes with Trmt112. As to expression, enriched in the brain.

The protein localises to the cytoplasm. It catalyses the reaction adenosine in rRNA + S-adenosyl-L-methionine = N(6)-methyladenosine in rRNA + S-adenosyl-L-homocysteine + H(+). Its function is as follows. Catalytic subunit of a heterodimer with Trmt112, which specifically methylates the 6th position of adenine in 18S rRNA. In Drosophila melanogaster (Fruit fly), this protein is rRNA N(6)-adenosine-methyltransferase Mettl5.